The following is an 83-amino-acid chain: Small ribosomal subunit protein uS17 (83 aa).

Belongs to the universal ribosomal protein uS17 family. Part of the 30S ribosomal subunit.

Functionally, one of the primary rRNA binding proteins, it binds specifically to the 5'-end of 16S ribosomal RNA. This chain is Small ribosomal subunit protein uS17, found in Ehrlichia canis (strain Jake).